Reading from the N-terminus, the 348-residue chain is Methylthioribose-1-phosphate isomerase (348 aa).

Substrate is bound by residues 48–50, R90, and Q195; that span reads RGA. D236 (proton donor) is an active-site residue. 246 to 247 is a binding site for substrate; sequence NK.

The protein belongs to the eIF-2B alpha/beta/delta subunits family. MtnA subfamily.

The enzyme catalyses 5-(methylsulfanyl)-alpha-D-ribose 1-phosphate = 5-(methylsulfanyl)-D-ribulose 1-phosphate. It functions in the pathway amino-acid biosynthesis; L-methionine biosynthesis via salvage pathway; L-methionine from S-methyl-5-thio-alpha-D-ribose 1-phosphate: step 1/6. Functionally, catalyzes the interconversion of methylthioribose-1-phosphate (MTR-1-P) into methylthioribulose-1-phosphate (MTRu-1-P). The chain is Methylthioribose-1-phosphate isomerase from Exiguobacterium sibiricum (strain DSM 17290 / CCUG 55495 / CIP 109462 / JCM 13490 / 255-15).